A 260-amino-acid chain; its full sequence is MASSVPAPSGSVITVASSSSSAAAAAVCGTGSPCAACKFLRRKCQPDCVFAPYFPPDNPQKFVHVHRVFGASNVTKLLNELHPFQREDAVNSLAYEADMRLRDPVYGCVGVISILQHNLRQLQQDLARAKYELSKYQAAAAASASTAPTGPQAMAEFIGNAMPNGAHNFINIGHSAALGSLGGSASVFGQEQFGNAQMLSRSYDGGEPIARLGINGGGYEFGYSTAMGGSGAVSGLGTLGISPFLKSGTAGGDEKPNGGQ.

The region spanning 32–133 is the LOB domain; it reads SPCAACKFLR…QDLARAKYEL (102 aa).

The protein belongs to the LOB domain-containing protein family. In terms of assembly, interacts with RS2. In terms of tissue distribution, expressed in leaves, leaf primordia, immature ears, immature tassels, whole ovules, silk and husk leaves. Found on the adaxial side of organs.

The protein resides in the nucleus. In terms of biological role, promotes the switch from proliferation to differentiation in the embryo sac. Negative regulator of cell proliferation in the adaxial side of leaves. Regulates the formation of a symmetric lamina and the establishment of venation. Interacts directly with RS2 (rough sheath 2) to repress some knox homeobox genes. The chain is LOB domain-containing protein 6 (LBD6) from Zea mays (Maize).